A 204-amino-acid chain; its full sequence is Thiamine-phosphate synthase (204 aa).

4-amino-2-methyl-5-(diphosphooxymethyl)pyrimidine-binding positions include 35–39 (QVREK) and Asn67. Mg(2+) is bound by residues Asp68 and Asp87. Ser106 lines the 4-amino-2-methyl-5-(diphosphooxymethyl)pyrimidine pocket. 132 to 134 (TPT) is a binding site for 2-[(2R,5Z)-2-carboxy-4-methylthiazol-5(2H)-ylidene]ethyl phosphate. Lys135 is a binding site for 4-amino-2-methyl-5-(diphosphooxymethyl)pyrimidine. Residues Gly163 and 183-184 (VS) contribute to the 2-[(2R,5Z)-2-carboxy-4-methylthiazol-5(2H)-ylidene]ethyl phosphate site.

The protein belongs to the thiamine-phosphate synthase family. Mg(2+) is required as a cofactor.

The enzyme catalyses 2-[(2R,5Z)-2-carboxy-4-methylthiazol-5(2H)-ylidene]ethyl phosphate + 4-amino-2-methyl-5-(diphosphooxymethyl)pyrimidine + 2 H(+) = thiamine phosphate + CO2 + diphosphate. The catalysed reaction is 2-(2-carboxy-4-methylthiazol-5-yl)ethyl phosphate + 4-amino-2-methyl-5-(diphosphooxymethyl)pyrimidine + 2 H(+) = thiamine phosphate + CO2 + diphosphate. It carries out the reaction 4-methyl-5-(2-phosphooxyethyl)-thiazole + 4-amino-2-methyl-5-(diphosphooxymethyl)pyrimidine + H(+) = thiamine phosphate + diphosphate. It functions in the pathway cofactor biosynthesis; thiamine diphosphate biosynthesis; thiamine phosphate from 4-amino-2-methyl-5-diphosphomethylpyrimidine and 4-methyl-5-(2-phosphoethyl)-thiazole: step 1/1. Functionally, condenses 4-methyl-5-(beta-hydroxyethyl)thiazole monophosphate (THZ-P) and 2-methyl-4-amino-5-hydroxymethyl pyrimidine pyrophosphate (HMP-PP) to form thiamine monophosphate (TMP). This chain is Thiamine-phosphate synthase, found in Vibrio parahaemolyticus serotype O3:K6 (strain RIMD 2210633).